The primary structure comprises 305 residues: UDP-3-O-acyl-N-acetylglucosamine deacetylase (305 aa).

Zn(2+)-binding residues include His78, His235, and Asp239. His262 functions as the Proton donor in the catalytic mechanism.

This sequence belongs to the LpxC family. The cofactor is Zn(2+).

The enzyme catalyses a UDP-3-O-[(3R)-3-hydroxyacyl]-N-acetyl-alpha-D-glucosamine + H2O = a UDP-3-O-[(3R)-3-hydroxyacyl]-alpha-D-glucosamine + acetate. The protein operates within glycolipid biosynthesis; lipid IV(A) biosynthesis; lipid IV(A) from (3R)-3-hydroxytetradecanoyl-[acyl-carrier-protein] and UDP-N-acetyl-alpha-D-glucosamine: step 2/6. In terms of biological role, catalyzes the hydrolysis of UDP-3-O-myristoyl-N-acetylglucosamine to form UDP-3-O-myristoylglucosamine and acetate, the committed step in lipid A biosynthesis. The chain is UDP-3-O-acyl-N-acetylglucosamine deacetylase from Geobacter sp. (strain M21).